Reading from the N-terminus, the 100-residue chain is Small ribosomal subunit protein uS14c (100 aa).

The protein belongs to the universal ribosomal protein uS14 family. In terms of assembly, part of the 30S ribosomal subunit.

Its subcellular location is the plastid. It localises to the chloroplast. Its function is as follows. Binds 16S rRNA, required for the assembly of 30S particles. This Cycas taitungensis (Prince sago) protein is Small ribosomal subunit protein uS14c.